The following is a 151-amino-acid chain: Globin-2 B chain (151 aa).

An N-acetylserine modification is found at Ser-1. Residues 11–151 (VSNADQKDLL…SLVAVVQASL (141 aa)) enclose the Globin domain. His-103 serves as a coordination point for heme b.

Belongs to the globin family. In terms of assembly, heterotetramer of two alpha chains and two beta chains.

The chain is Globin-2 B chain from Anadara inaequivalvis (Inequivalve ark).